The primary structure comprises 447 residues: Phosphoglucosamine mutase (447 aa).

Residue Ser-100 is the Phosphoserine intermediate of the active site. Residues Ser-100, Asp-240, Asp-242, and Asp-244 each contribute to the Mg(2+) site. Ser-100 is subject to Phosphoserine.

This sequence belongs to the phosphohexose mutase family. Mg(2+) is required as a cofactor. Activated by phosphorylation.

It catalyses the reaction alpha-D-glucosamine 1-phosphate = D-glucosamine 6-phosphate. In terms of biological role, catalyzes the conversion of glucosamine-6-phosphate to glucosamine-1-phosphate. The chain is Phosphoglucosamine mutase from Clostridium botulinum (strain Alaska E43 / Type E3).